A 397-amino-acid polypeptide reads, in one-letter code: Putative nickel insertion protein (397 aa).

The protein belongs to the LarC family.

The protein is Putative nickel insertion protein of Synechococcus sp. (strain JA-3-3Ab) (Cyanobacteria bacterium Yellowstone A-Prime).